We begin with the raw amino-acid sequence, 466 residues long: Cytochrome P450 85A (466 aa).

Residues 2–22 (ALFMAILGVLVLLLCLCSALL) traverse the membrane as a helical segment. Cys414 lines the heme pocket.

It belongs to the cytochrome P450 family. Heme is required as a cofactor.

The protein resides in the membrane. Its function is as follows. Catalyzes the C6-oxidation step in brassinosteroids biosynthesis. In Phaseolus vulgaris (Kidney bean), this protein is Cytochrome P450 85A.